We begin with the raw amino-acid sequence, 86 residues long: Large ribosomal subunit protein bL27 (86 aa).

Residues 1 to 10 (MAQKKGGGST) show a composition bias toward gly residues. Residues 1–21 (MAQKKGGGSTRNGRDSESKRL) are disordered.

It belongs to the bacterial ribosomal protein bL27 family.

The sequence is that of Large ribosomal subunit protein bL27 from Cupriavidus necator (strain ATCC 17699 / DSM 428 / KCTC 22496 / NCIMB 10442 / H16 / Stanier 337) (Ralstonia eutropha).